The chain runs to 183 residues: Inner membrane-spanning protein YciB (183 aa).

5 helical membrane-spanning segments follow: residues Ile22 to Leu42, Met50 to Asp70, Ala72 to Ser92, Val118 to Phe138, and Phe148 to Leu168.

It belongs to the YciB family.

Its subcellular location is the cell inner membrane. Its function is as follows. Plays a role in cell envelope biogenesis, maintenance of cell envelope integrity and membrane homeostasis. This Shewanella frigidimarina (strain NCIMB 400) protein is Inner membrane-spanning protein YciB.